Reading from the N-terminus, the 247-residue chain is Cell division protein ZapD (247 aa).

It belongs to the ZapD family. As to quaternary structure, interacts with FtsZ.

It localises to the cytoplasm. In terms of biological role, cell division factor that enhances FtsZ-ring assembly. Directly interacts with FtsZ and promotes bundling of FtsZ protofilaments, with a reduction in FtsZ GTPase activity. The sequence is that of Cell division protein ZapD from Escherichia coli O7:K1 (strain IAI39 / ExPEC).